The primary structure comprises 100 residues: MARKSLIQREKKRQKLEQKYHLIRRSSKKEISKVPSLSEKWKIHGKLQSSPRNSAPTRLHRRCFSTGRPRANYRDFGLSGHILREMVHACLLPGATRSSW.

It belongs to the universal ribosomal protein uS14 family. In terms of assembly, part of the 30S ribosomal subunit.

The protein resides in the plastid. It is found in the chloroplast. Functionally, binds 16S rRNA, required for the assembly of 30S particles. The protein is Small ribosomal subunit protein uS14c of Eucalyptus globulus subsp. globulus (Tasmanian blue gum).